Here is a 467-residue protein sequence, read N- to C-terminus: DNA repair protein RadA (467 aa).

The C4-type zinc finger occupies 10 to 27; the sequence is CQNCGAVHSRWAGKCDSC. 98-105 contacts ATP; it reads GDPGIGKS. A RadA KNRFG motif motif is present at residues 260 to 264; that stretch reads KNRFG. The interval 359–467 is lon-protease-like; sequence DVYLNVAGGY…RIAASGAGKK (109 aa).

Belongs to the RecA family. RadA subfamily.

Functionally, DNA-dependent ATPase involved in processing of recombination intermediates, plays a role in repairing DNA breaks. Stimulates the branch migration of RecA-mediated strand transfer reactions, allowing the 3' invading strand to extend heteroduplex DNA faster. Binds ssDNA in the presence of ADP but not other nucleotides, has ATPase activity that is stimulated by ssDNA and various branched DNA structures, but inhibited by SSB. Does not have RecA's homology-searching function. The protein is DNA repair protein RadA of Brucella abortus (strain 2308).